Consider the following 129-residue polypeptide: Small ribosomal subunit protein uS9 (129 aa).

Residues 110 to 129 (VERKKYGKKKARKSFQFSKR) are disordered. Residues 114–129 (KYGKKKARKSFQFSKR) are compositionally biased toward basic residues.

It belongs to the universal ribosomal protein uS9 family.

This is Small ribosomal subunit protein uS9 from Chlorobaculum parvum (strain DSM 263 / NCIMB 8327) (Chlorobium vibrioforme subsp. thiosulfatophilum).